The following is a 237-amino-acid chain: 2,3,4,5-tetrahydropyridine-2,6-dicarboxylate N-acetyltransferase (237 aa).

This sequence belongs to the transferase hexapeptide repeat family. DapH subfamily.

It carries out the reaction (S)-2,3,4,5-tetrahydrodipicolinate + acetyl-CoA + H2O = L-2-acetamido-6-oxoheptanedioate + CoA. It participates in amino-acid biosynthesis; L-lysine biosynthesis via DAP pathway; LL-2,6-diaminopimelate from (S)-tetrahydrodipicolinate (acetylase route): step 1/3. Its function is as follows. Catalyzes the transfer of an acetyl group from acetyl-CoA to tetrahydrodipicolinate. This chain is 2,3,4,5-tetrahydropyridine-2,6-dicarboxylate N-acetyltransferase, found in Limosilactobacillus fermentum (strain NBRC 3956 / LMG 18251) (Lactobacillus fermentum).